The primary structure comprises 133 residues: Large ribosomal subunit protein eL32z (133 aa).

It belongs to the eukaryotic ribosomal protein eL32 family.

In Arabidopsis thaliana (Mouse-ear cress), this protein is Large ribosomal subunit protein eL32z (RPL32A).